We begin with the raw amino-acid sequence, 272 residues long: Acetylglutamate kinase (272 aa).

Residues 41–42 (GG), R63, and N166 contribute to the substrate site.

Belongs to the acetylglutamate kinase family. ArgB subfamily.

Its subcellular location is the cytoplasm. The catalysed reaction is N-acetyl-L-glutamate + ATP = N-acetyl-L-glutamyl 5-phosphate + ADP. Its pathway is amino-acid biosynthesis; L-arginine biosynthesis; N(2)-acetyl-L-ornithine from L-glutamate: step 2/4. Catalyzes the ATP-dependent phosphorylation of N-acetyl-L-glutamate. This chain is Acetylglutamate kinase, found in Anaeromyxobacter dehalogenans (strain 2CP-1 / ATCC BAA-258).